Here is a 105-residue protein sequence, read N- to C-terminus: Large ribosomal subunit protein eL36 (105 aa).

The interval 1–20 (MAKEAPAKTGLAVGLNKGHK) is disordered.

The protein belongs to the eukaryotic ribosomal protein eL36 family.

This chain is Large ribosomal subunit protein eL36 (rpl36), found in Trichoderma hamatum.